A 295-amino-acid polypeptide reads, in one-letter code: Transcription factor MYB34 (295 aa).

2 consecutive HTH myb-type domains span residues 9–61 and 62–116; these read EEGI…ANYL and RPDI…KKRL. DNA-binding regions (H-T-H motif) lie at residues 37 to 61 and 89 to 112; these read WRTLPEKAGLKRCGKSCRLRWANYL and WAAIATSLAGRTDNEIKNYWNTNL.

In terms of assembly, can form complexes with MYC2, MYC3 or MYC4. As to expression, expressed in trichomes.

The protein resides in the nucleus. Transcription factor involved in tryptophan gene activation and in indole-3-acetic acid (IAA) and indolic glucosinolates (IG) biosynthesis. Acts as a direct transcriptional activator of both Trp synthesis genes and Trp secondary metabolism genes. The chain is Transcription factor MYB34 (MYB34) from Arabidopsis thaliana (Mouse-ear cress).